A 418-amino-acid chain; its full sequence is Light-independent protochlorophyllide reductase subunit N (418 aa).

[4Fe-4S] cluster is bound by residues Cys17, Cys42, and Cys103.

The protein belongs to the BchN/ChlN family. Protochlorophyllide reductase is composed of three subunits; ChlL, ChlN and ChlB. Forms a heterotetramer of two ChlB and two ChlN subunits. It depends on [4Fe-4S] cluster as a cofactor.

The enzyme catalyses chlorophyllide a + oxidized 2[4Fe-4S]-[ferredoxin] + 2 ADP + 2 phosphate = protochlorophyllide a + reduced 2[4Fe-4S]-[ferredoxin] + 2 ATP + 2 H2O. The protein operates within porphyrin-containing compound metabolism; chlorophyll biosynthesis (light-independent). In terms of biological role, component of the dark-operative protochlorophyllide reductase (DPOR) that uses Mg-ATP and reduced ferredoxin to reduce ring D of protochlorophyllide (Pchlide) to form chlorophyllide a (Chlide). This reaction is light-independent. The NB-protein (ChlN-ChlB) is the catalytic component of the complex. This chain is Light-independent protochlorophyllide reductase subunit N, found in Prochlorococcus marinus (strain MIT 9515).